The primary structure comprises 262 residues: Co-chaperone protein DjlA (262 aa).

Residues 1–6 (MRFWGK) lie on the Periplasmic side of the membrane. Residues 7–30 (FFGFVIGFMFGRFFGALLGLWLGH) traverse the membrane as a helical segment. Residues 31–262 (LYDKRPGGGA…DRVKSERGMR (232 aa)) are Cytoplasmic-facing. The region spanning 196–262 (DAYHLLGITA…DRVKSERGMR (67 aa)) is the J domain.

As to quaternary structure, homodimer.

Its subcellular location is the cell inner membrane. Its function is as follows. Regulatory DnaK co-chaperone. Direct interaction between DnaK and DjlA is needed for the induction of the wcaABCDE operon, involved in the synthesis of a colanic acid polysaccharide capsule, possibly through activation of the RcsB/RcsC phosphotransfer signaling pathway. The colanic acid capsule may help the bacterium survive conditions outside the host. In Shewanella oneidensis (strain ATCC 700550 / JCM 31522 / CIP 106686 / LMG 19005 / NCIMB 14063 / MR-1), this protein is Co-chaperone protein DjlA.